We begin with the raw amino-acid sequence, 414 residues long: Serine hydroxymethyltransferase (414 aa).

Residues Leu116 and 120–122 (GHL) each bind (6S)-5,6,7,8-tetrahydrofolate. Residue Lys225 is modified to N6-(pyridoxal phosphate)lysine. Residue 349 to 351 (SPF) participates in (6S)-5,6,7,8-tetrahydrofolate binding.

It belongs to the SHMT family. In terms of assembly, homodimer. Requires pyridoxal 5'-phosphate as cofactor.

The protein resides in the cytoplasm. It carries out the reaction (6R)-5,10-methylene-5,6,7,8-tetrahydrofolate + glycine + H2O = (6S)-5,6,7,8-tetrahydrofolate + L-serine. It functions in the pathway one-carbon metabolism; tetrahydrofolate interconversion. It participates in amino-acid biosynthesis; glycine biosynthesis; glycine from L-serine: step 1/1. Functionally, catalyzes the reversible interconversion of serine and glycine with tetrahydrofolate (THF) serving as the one-carbon carrier. This reaction serves as the major source of one-carbon groups required for the biosynthesis of purines, thymidylate, methionine, and other important biomolecules. Also exhibits THF-independent aldolase activity toward beta-hydroxyamino acids, producing glycine and aldehydes, via a retro-aldol mechanism. This is Serine hydroxymethyltransferase from Oenococcus oeni (strain ATCC BAA-331 / PSU-1).